We begin with the raw amino-acid sequence, 234 residues long: Ribonuclease 3 (234 aa).

One can recognise an RNase III domain in the interval 13 to 136; it reads YITLEKALGY…LMAGVYLEAG (124 aa). Glu49 contributes to the Mg(2+) binding site. The active site involves Asp53. Positions 122 and 125 each coordinate Mg(2+). The active site involves Glu125. The DRBM domain occupies 163 to 232; that stretch reads DYKTALQELT…AYQALQKLKG (70 aa).

The protein belongs to the ribonuclease III family. As to quaternary structure, homodimer. It depends on Mg(2+) as a cofactor.

It is found in the cytoplasm. It catalyses the reaction Endonucleolytic cleavage to 5'-phosphomonoester.. Its function is as follows. Digests double-stranded RNA. Involved in the processing of primary rRNA transcript to yield the immediate precursors to the large and small rRNAs (23S and 16S). Processes some mRNAs, and tRNAs when they are encoded in the rRNA operon. Processes pre-crRNA and tracrRNA of type II CRISPR loci if present in the organism. This chain is Ribonuclease 3, found in Helicobacter acinonychis (strain Sheeba).